A 238-amino-acid chain; its full sequence is Neuromodulin (238 aa).

The segment at M1–A238 is disordered. 2 S-palmitoyl cysteine lipidation sites follow: C3 and C4. Residues K9–H32 are compositionally biased toward basic and acidic residues. Positions A31–Q60 constitute an IQ domain. The residue at position 41 (S41) is a Phosphoserine; by PHK and PKC. The span at E54–E83 shows a compositional bias: basic and acidic residues. Over residues G84–G95 the composition is skewed to low complexity. The span at K97 to G116 shows a compositional bias: basic and acidic residues. Residues A119–S130 are compositionally biased toward low complexity. Residues E139–S154 are compositionally biased toward polar residues. A phosphoserine mark is found at S151, S153, and S154. The segment covering K155–Q167 has biased composition (basic and acidic residues). Positions A168–T199 are enriched in low complexity. T181 carries the post-translational modification Phosphothreonine. 2 positions are modified to phosphoserine; by CK2: S202 and S203. Residues D213 to E225 show a composition bias toward basic and acidic residues. Positions G226 to A238 are enriched in acidic residues.

It belongs to the neuromodulin family. In terms of assembly, identified in a complex containing FGFR4, NCAM1, CDH2, PLCG1, FRS2, SRC, SHC1, GAP43 and CTTN. Interacts (via IQ domain) with calmodulin. Binds calmodulin with a greater affinity in the absence of Ca(2+) than in its presence. Post-translationally, phosphorylated. Phosphorylation of this protein by a protein kinase C is specifically correlated with certain forms of synaptic plasticity. Palmitoylated by ZDHHC3. Palmitoylation is regulated by ARF6 and is essential for plasma membrane association and axonal and dendritic filopodia induction. Deacylated by LYPLA2.

The protein localises to the cell membrane. It localises to the cell projection. It is found in the growth cone membrane. The protein resides in the synapse. Its subcellular location is the filopodium membrane. The protein localises to the perikaryon. It localises to the dendrite. It is found in the axon. The protein resides in the cytoplasm. This protein is associated with nerve growth. It is a major component of the motile 'growth cones' that form the tips of elongating axons. Plays a role in axonal and dendritic filopodia induction. The sequence is that of Neuromodulin (GAP43) from Macaca fascicularis (Crab-eating macaque).